A 120-amino-acid chain; its full sequence is Flagellar protein FliT (120 aa).

The segment at 1-50 (MERHQHLLSEYQQILTLSEQMLMLATVENWDALVDLEMAYLKAVENTANI) is required for homodimerization. The tract at residues 60 to 98 (LQELLRQKLRSILENEIEIKRLLQRRLDKLSELVGQSTR) is fliD binding.

Belongs to the FliT family. In terms of assembly, homodimer. Interacts with FliD and FlhC.

Its subcellular location is the cytoplasm. It is found in the cytosol. Functionally, dual-function protein that regulates the transcription of class 2 flagellar operons and that also acts as an export chaperone for the filament-capping protein FliD. As a transcriptional regulator, acts as an anti-FlhDC factor; it directly binds FlhC, thus inhibiting the binding of the FlhC/FlhD complex to class 2 promoters, resulting in decreased expression of class 2 flagellar operons. As a chaperone, effects FliD transition to the membrane by preventing its premature polymerization, and by directing it to the export apparatus. The protein is Flagellar protein FliT of Yersinia pseudotuberculosis serotype IB (strain PB1/+).